Here is a 262-residue protein sequence, read N- to C-terminus: Putative hydro-lyase BLi00500/BL02808 (262 aa).

Belongs to the D-glutamate cyclase family.

The sequence is that of Putative hydro-lyase BLi00500/BL02808 from Bacillus licheniformis (strain ATCC 14580 / DSM 13 / JCM 2505 / CCUG 7422 / NBRC 12200 / NCIMB 9375 / NCTC 10341 / NRRL NRS-1264 / Gibson 46).